The sequence spans 241 residues: Dolichol-phosphate mannosyltransferase subunit 1 (241 aa).

Positions 13, 15, 17, 44, 46, 99, 100, 101, 128, 215, and 221 each coordinate GDP-alpha-D-mannose. D101 provides a ligand contact to Mg(2+). D101 is a binding site for Mn(2+).

This sequence belongs to the glycosyltransferase 2 family. The cofactor is Mg(2+). Mn(2+) is required as a cofactor. Requires Ca(2+) as cofactor.

It localises to the endoplasmic reticulum. The catalysed reaction is a di-trans,poly-cis-dolichyl phosphate + GDP-alpha-D-mannose = a di-trans,poly-cis-dolichyl beta-D-mannosyl phosphate + GDP. The protein operates within protein modification; protein glycosylation. Functionally, transfers mannose from GDP-mannose to dolichol monophosphate to form dolichol phosphate mannose (Dol-P-Man) which is the mannosyl donor in pathways leading to N-glycosylation, glycosyl phosphatidylinositol membrane anchoring, and O-mannosylation of proteins. In Drosophila melanogaster (Fruit fly), this protein is Dolichol-phosphate mannosyltransferase subunit 1.